Reading from the N-terminus, the 298-residue chain is N-acetylmuramic acid 6-phosphate etherase (298 aa).

An SIS domain is found at 55–218 (IHTQVSGGGR…STGLMIKSGK (164 aa)). E83 (proton donor) is an active-site residue. The active site involves E114.

Belongs to the GCKR-like family. MurNAc-6-P etherase subfamily. Homodimer.

It carries out the reaction N-acetyl-D-muramate 6-phosphate + H2O = N-acetyl-D-glucosamine 6-phosphate + (R)-lactate. It functions in the pathway amino-sugar metabolism; 1,6-anhydro-N-acetylmuramate degradation. It participates in amino-sugar metabolism; N-acetylmuramate degradation. The protein operates within cell wall biogenesis; peptidoglycan recycling. Specifically catalyzes the cleavage of the D-lactyl ether substituent of MurNAc 6-phosphate, producing GlcNAc 6-phosphate and D-lactate. Together with AnmK, is also required for the utilization of anhydro-N-acetylmuramic acid (anhMurNAc) either imported from the medium or derived from its own cell wall murein, and thus plays a role in cell wall recycling. In Escherichia coli O127:H6 (strain E2348/69 / EPEC), this protein is N-acetylmuramic acid 6-phosphate etherase.